Consider the following 334-residue polypeptide: GTP 3',8-cyclase (334 aa).

The Radical SAM core domain occupies 11-236 (GFNRKIDYLR…ESTESSMGPA (226 aa)). GTP is bound at residue R20. [4Fe-4S] cluster contacts are provided by C27 and C31. Y33 contacts S-adenosyl-L-methionine. Position 34 (C34) interacts with [4Fe-4S] cluster. A GTP-binding site is contributed by R69. G73 lines the S-adenosyl-L-methionine pocket. GTP is bound at residue T100. Residue S124 coordinates S-adenosyl-L-methionine. K161 provides a ligand contact to GTP. S-adenosyl-L-methionine is bound at residue M195. 2 residues coordinate [4Fe-4S] cluster: C260 and C263. 265–267 (RVR) contributes to the GTP binding site. [4Fe-4S] cluster is bound at residue C277.

Belongs to the radical SAM superfamily. MoaA family. As to quaternary structure, monomer and homodimer. It depends on [4Fe-4S] cluster as a cofactor.

It carries out the reaction GTP + AH2 + S-adenosyl-L-methionine = (8S)-3',8-cyclo-7,8-dihydroguanosine 5'-triphosphate + 5'-deoxyadenosine + L-methionine + A + H(+). Its pathway is cofactor biosynthesis; molybdopterin biosynthesis. Its function is as follows. Catalyzes the cyclization of GTP to (8S)-3',8-cyclo-7,8-dihydroguanosine 5'-triphosphate. The polypeptide is GTP 3',8-cyclase (Pseudomonas putida (strain ATCC 700007 / DSM 6899 / JCM 31910 / BCRC 17059 / LMG 24140 / F1)).